The sequence spans 445 residues: Phosphoglucosamine mutase (445 aa).

Ser-99 functions as the Phosphoserine intermediate in the catalytic mechanism. 4 residues coordinate Mg(2+): Ser-99, Asp-242, Asp-244, and Asp-246. Ser-99 is subject to Phosphoserine.

This sequence belongs to the phosphohexose mutase family. The cofactor is Mg(2+). Post-translationally, activated by phosphorylation.

The enzyme catalyses alpha-D-glucosamine 1-phosphate = D-glucosamine 6-phosphate. Its function is as follows. Catalyzes the conversion of glucosamine-6-phosphate to glucosamine-1-phosphate. This Helicobacter pylori (strain Shi470) protein is Phosphoglucosamine mutase.